Consider the following 122-residue polypeptide: Large ribosomal subunit protein uL14 (122 aa).

Belongs to the universal ribosomal protein uL14 family. As to quaternary structure, part of the 50S ribosomal subunit. Forms a cluster with proteins L3 and L19. In the 70S ribosome, L14 and L19 interact and together make contacts with the 16S rRNA in bridges B5 and B8.

Functionally, binds to 23S rRNA. Forms part of two intersubunit bridges in the 70S ribosome. This is Large ribosomal subunit protein uL14 from Streptococcus suis (strain 05ZYH33).